A 1113-amino-acid chain; its full sequence is Coiled-coil domain-containing protein 158 (1113 aa).

Polar residues predominate over residues 1-14; the sequence is MESKAWESNNEDLL. The tract at residues 1-26 is disordered; it reads MESKAWESNNEDLLSSSGVTSNGGSS. Low complexity predominate over residues 15–26; that stretch reads SSSGVTSNGGSS. 2 coiled-coil regions span residues 72 to 183 and 243 to 833; these read GKEH…LSHE and VEDQ…QEQE. Disordered stretches follow at residues 848–902 and 955–1062; these read LQGP…DPTR and CHRS…IETT. Polar residues-rich tracts occupy residues 867–894, 955–974, 994–1017, 1024–1040, and 1053–1062; these read ASVTRSHSNVPSSQSTASFLSHHSTKAN, CHRSNNSLRDSTEGSKSSET, FTFTSAASPSVKNSASRSFNSSPK, LLTSSVEGSIGSTSQYR, and DSQSPPIETT. A coiled-coil region spans residues 1061–1113; the sequence is TTGKTCRKLQNRLESLQTLVEDLQLKNQAMSSMIRNQEKRIQKVKDQEKMLLK.

This chain is Coiled-coil domain-containing protein 158 (CCDC158), found in Homo sapiens (Human).